We begin with the raw amino-acid sequence, 67 residues long: ATP synthase protein 8 (67 aa).

Residues 8 to 24 (TWFITILSMLMTLFILF) form a helical membrane-spanning segment. Residue lysine 54 is modified to N6-acetyllysine; alternate. N6-succinyllysine; alternate is present on lysine 54. Residue lysine 57 is modified to N6-acetyllysine.

It belongs to the ATPase protein 8 family. F-type ATPases have 2 components, CF(1) - the catalytic core - and CF(0) - the membrane proton channel. Component of an ATP synthase complex composed of ATP5PB, ATP5MC1, ATP5F1E, ATP5PD, ATP5ME, ATP5PF, ATP5MF, MT-ATP6, MT-ATP8, ATP5F1A, ATP5F1B, ATP5F1D, ATP5F1C, ATP5PO, ATP5MG, ATP5MK and ATP5MJ. Interacts with PRICKLE3.

It localises to the mitochondrion membrane. Mitochondrial membrane ATP synthase (F(1)F(0) ATP synthase or Complex V) produces ATP from ADP in the presence of a proton gradient across the membrane which is generated by electron transport complexes of the respiratory chain. F-type ATPases consist of two structural domains, F(1) - containing the extramembraneous catalytic core and F(0) - containing the membrane proton channel, linked together by a central stalk and a peripheral stalk. During catalysis, ATP synthesis in the catalytic domain of F(1) is coupled via a rotary mechanism of the central stalk subunits to proton translocation. Part of the complex F(0) domain. Minor subunit located with subunit a in the membrane. In Vicugna pacos (Alpaca), this protein is ATP synthase protein 8 (MT-ATP8).